The primary structure comprises 481 residues: UDP-glycosyltransferase 71K2 (481 aa).

UDP-alpha-D-glucose-binding positions include serine 285, 350-351 (WA), 368-376 (HCGWNSILE), and 390-393 (YAEQ).

This sequence belongs to the UDP-glycosyltransferase family.

Functionally, glycosyltransferase that possesses chalcone and flavonol 2'-O-glycosyltransferase activity. Converts phloretin to phlorizin (phloretin 2'-O-glucoside), a potent antioxidant. Possesses glycosyltransferase activity toward quercetin, isoliquiritigenin, butein and caffeic acid. This is UDP-glycosyltransferase 71K2 from Pyrus communis (Pear).